Consider the following 1050-residue polypeptide: Collagen alpha-2(I) chain (1050 aa).

The disordered stretch occupies residues S1–A1050. 2 positions are modified to 4-hydroxyproline: P10 and P13. Over residues R20 to G32 the composition is skewed to gly residues. 2 stretches are compositionally biased toward low complexity: residues L33–P46 and E56–K77. 4-hydroxyproline is present on residues P40 and P46. The span at A78 to E92 shows a compositional bias: basic and acidic residues. 5-hydroxylysine; alternate is present on K114. The O-linked (Gal...) hydroxylysine; alternate glycan is linked to K114. Low complexity-rich tracts occupy residues V161–P190, P236–P257, E298–S311, N320–P338, and P355–S371. 4-hydroxyproline is present on residues P377 and P380. Low complexity-rich tracts occupy residues L406–A425 and A452–Q467. Residues G474–G483 show a composition bias toward gly residues. 3 stretches are compositionally biased toward low complexity: residues P530–P547, V598–S642, and V649–A669. The span at K670–K679 shows a compositional bias: basic and acidic residues. Over residues P687–A697 the composition is skewed to low complexity. Over residues G707–G716 the composition is skewed to gly residues. Residues T718–T727 show a composition bias toward low complexity. Residues G764 to G773 show a composition bias toward gly residues. Low complexity-rich tracts occupy residues S781 to P808, L816 to S841, Y881 to A903, and E911 to P926. A compositionally biased stretch (basic and acidic residues) spans R936 to P947. Over residues S1020–P1032 the composition is skewed to pro residues.

The protein belongs to the fibrillar collagen family. As to quaternary structure, trimers of one alpha 2(I) and two alpha 1(I) chains. Interacts (via C-terminus) with TMEM131 (via PapD-L domain); the interaction is direct and is involved in assembly and TRAPPIII ER-to-Golgi transport complex-dependent secretion of collagen. Post-translationally, prolines at the third position of the tripeptide repeating unit (G-X-Y) are hydroxylated in some or all of the chains. As to expression, expressed in bones.

The protein localises to the secreted. Its subcellular location is the extracellular space. It is found in the extracellular matrix. Functionally, type I collagen is a member of group I collagen (fibrillar forming collagen). This is Collagen alpha-2(I) chain from Megatherium americanum (Giant ground sloth).